A 222-amino-acid chain; its full sequence is ATP synthase F(0) complex subunit a (222 aa).

6 helical membrane-spanning segments follow: residues 8-28 (FFYV…ILLP), 64-84 (WSLM…LGLL), 93-113 (QLTV…VPGF), 127-147 (QGTP…SLLI), 160-180 (ITAG…LSSI), and 197-219 (ILEL…LYLH).

This sequence belongs to the ATPase A chain family. In terms of assembly, component of the ATP synthase complex composed at least of ATP5F1A/subunit alpha, ATP5F1B/subunit beta, ATP5MC1/subunit c (homooctomer), MT-ATP6/subunit a, MT-ATP8/subunit 8, ATP5ME/subunit e, ATP5MF/subunit f, ATP5MG/subunit g, ATP5MK/subunit k, ATP5MJ/subunit j, ATP5F1C/subunit gamma, ATP5F1D/subunit delta, ATP5F1E/subunit epsilon, ATP5PF/subunit F6, ATP5PB/subunit b, ATP5PD/subunit d, ATP5PO/subunit OSCP. ATP synthase complex consists of a soluble F(1) head domain (subunits alpha(3) and beta(3)) - the catalytic core - and a membrane F(0) domain - the membrane proton channel (subunits c, a, 8, e, f, g, k and j). These two domains are linked by a central stalk (subunits gamma, delta, and epsilon) rotating inside the F1 region and a stationary peripheral stalk (subunits F6, b, d, and OSCP). Interacts with DNAJC30; interaction is direct.

It localises to the mitochondrion inner membrane. The enzyme catalyses H(+)(in) = H(+)(out). In terms of biological role, subunit a, of the mitochondrial membrane ATP synthase complex (F(1)F(0) ATP synthase or Complex V) that produces ATP from ADP in the presence of a proton gradient across the membrane which is generated by electron transport complexes of the respiratory chain. ATP synthase complex consist of a soluble F(1) head domain - the catalytic core - and a membrane F(1) domain - the membrane proton channel. These two domains are linked by a central stalk rotating inside the F(1) region and a stationary peripheral stalk. During catalysis, ATP synthesis in the catalytic domain of F(1) is coupled via a rotary mechanism of the central stalk subunits to proton translocation. With the subunit c (ATP5MC1), forms the proton-conducting channel in the F(0) domain, that contains two crucial half-channels (inlet and outlet) that facilitate proton movement from the mitochondrial intermembrane space (IMS) into the matrix. Protons are taken up via the inlet half-channel and released through the outlet half-channel, following a Grotthuss mechanism. The protein is ATP synthase F(0) complex subunit a of Loxodonta africana (African elephant).